The primary structure comprises 244 residues: Glutathione S-transferase theta-2 (244 aa).

Positions 2-82 constitute a GST N-terminal domain; sequence GLELYLDLLS…YLSSKYQVAD (81 aa). Residues 40 to 41, 53 to 54, 66 to 67, and 104 to 107 contribute to the glutathione site; these read HM, KV, ES, and DNIR. Residues 88 to 230 enclose the GST C-terminal domain; sequence DLQARAQVHE…AKKMLPVPPP (143 aa).

This sequence belongs to the GST superfamily. Theta family. In terms of assembly, homodimer. As to expression, in liver, highest expression found in central vein limiting plate hepatocytes. Also expressed in interlobular bile duct epithelial cells. In lung, expressed in club cells and ciliated cells of the bronchiolar epithelium and in type II alveolar cells of the lung parenchyma.

The protein resides in the cytoplasm. Its subcellular location is the cytosol. The protein localises to the nucleus. It catalyses the reaction RX + glutathione = an S-substituted glutathione + a halide anion + H(+). In terms of biological role, conjugation of reduced glutathione to a wide number of exogenous and endogenous hydrophobic electrophiles. In Mus musculus (Mouse), this protein is Glutathione S-transferase theta-2.